The primary structure comprises 257 residues: Glucose-1-phosphate cytidylyltransferase (257 aa).

Substrate is bound by residues leucine 6–leucine 10, glycine 11–arginine 13, lysine 23, serine 104, arginine 109, and glycine 128. Positions 129 and 234 each coordinate Mg(2+).

It belongs to the glucose-1-phosphate cytidylyltransferase family. As to quaternary structure, homohexamer. The cofactor is Mg(2+).

It catalyses the reaction alpha-D-glucose 1-phosphate + CTP + H(+) = CDP-D-glucose + diphosphate. It functions in the pathway nucleotide-sugar biosynthesis; CDP-3,6-dideoxy-D-mannose biosynthesis; CDP-3,6-dideoxy-D-mannose from CTP and alpha-D-glucose 1-phosphate: step 1/5. Its pathway is bacterial outer membrane biogenesis; LPS O-antigen biosynthesis. Functionally, involved in the biosynthesis of the tyvelose, a 3,6-dideoxyhexose found in the O-antigen of the surface lipopolysaccharides. It catalyzes the transfer of a CMP moiety from CTP to glucose 1-phosphate. In Salmonella typhimurium (strain LT2 / SGSC1412 / ATCC 700720), this protein is Glucose-1-phosphate cytidylyltransferase (rfbF).